Here is an 83-residue protein sequence, read N- to C-terminus: Mu-theraphotoxin-Hhn2g (83 aa).

An N-terminal signal peptide occupies residues 1–21 (MKASMYLALAGLVLLFVVGYA). Residues 22-48 (SESEEKEFPRELLSKIFAVDDFKGEER) constitute a propeptide that is removed on maturation. Cystine bridges form between cysteine 50–cysteine 65 and cysteine 57–cysteine 70. Leucine 81 is modified (leucine amide).

This sequence belongs to the neurotoxin 10 (Hwtx-1) family. 15 (Hntx-3) subfamily. Monomer. In terms of tissue distribution, expressed by the venom gland.

It localises to the secreted. Functionally, lethal neurotoxin. Selectively blocks tetrodotoxin-sensitive voltage-gated sodium channels (Nav). Does not affect tetrodotoxin-resistant voltage-gated sodium channels or calcium channels. This chain is Mu-theraphotoxin-Hhn2g, found in Cyriopagopus hainanus (Chinese bird spider).